Here is a 521-residue protein sequence, read N- to C-terminus: AAA ATPase forming ring-shaped complexes (521 aa).

Residues 4 to 44 (TEDLAALNDRLMAKNHALAEALSRAGKELTKAKSQLAQLAQ) are a coiled coil. 235 to 240 (GNGKTM) provides a ligand contact to ATP.

Belongs to the AAA ATPase family. Homohexamer. Assembles into a hexameric ring structure.

The sequence is that of AAA ATPase forming ring-shaped complexes from Bifidobacterium longum (strain NCC 2705).